A 790-amino-acid polypeptide reads, in one-letter code: MLIALVGLIFLLGGARLASLGGSWYFLLMGLATALAGVLIVLRRPAGALVYGVAFALTLVWALWDAGLEFWPLVSRLMLPAAFAVLVALAWPALRRSRALPTGRTAYGVATVLALAVVAGIGGMFVPHPPVAGNAGPGMTAVPPGSVQQNWSAYGNTDGGSRFAALDQINRSNGRPAAGSPGPTTPGEIANSDGNGAEDQLTPLQVGEKVFLCTPHNNLIALDASTGKQLWRREINATSSVWQRCRGLGYFDADAALPAPSVANPSPIAAVTVAQGANCRRRLFTNTIDGRLIAVDADTGAFCQGFGSNGQVDLKAGLGAAPDPFYQLTSPPLVAGTTVVGGRTRADDNVQTDMPGGVVRGSMWSPVRSAGLDPGNPHDRQAPAAGSSYVRSTPNVWAPMSYDAAMNTVFLPLGGPSTDLYGAERTALDHRYGASVLALDATTGAEKWVYQTVHNDLWDFDLPMQPSLIDFPNQDGSHTPAVVIGTKAGQIYVLDRATGKPLTEVREVPVKGSDIAHEQYAPTQPLSVGMPQIGTKHLTESDMWGATAMDQMLCRIAFKQMRYEGLYTAPGTDVSLSFPGSLGGMNWGGLSTDPVHDVVFANDMRLGLWVQMIPADTRKAEAAGGGEAVNTGMGAVPLKGTPYAVNKNRFLSALGIPCQAPPYGTLSAIDLKTRSIAWQVPVGTVQDTGPFGIKMHLPIPIGMPTLGGTLSTQGGLVFIAGTQDYYLRAFDSATGKELWKGRLPVGSQGGPITYVSHKTGKQYVVISAGGARQSPDRGDYVIAYSLPDAH.

4 consecutive transmembrane segments (helical) span residues 22-42 (GSWY…LIVL), 48-68 (ALVY…DAGL), 77-94 (LMLP…WPAL), and 106-126 (AYGV…GMFV). The tract at residues 171–200 (RSNGRPAAGSPGPTTPGEIANSDGNGAEDQ) is disordered. Over residues 174–187 (GRPAAGSPGPTTPG) the composition is skewed to low complexity.

Belongs to the bacterial PQQ dehydrogenase family. It depends on pyrroloquinoline quinone as a cofactor.

It is found in the cell membrane. The catalysed reaction is L-quinate + a quinone = 3-dehydroquinate + a quinol. Its pathway is aromatic compound metabolism; 3,4-dihydroxybenzoate biosynthesis; 3-dehydroquinate from D-quinate (PQQ route): step 1/1. This is Probable quinate dehydrogenase (quinone) (qumA) from Xanthomonas campestris pv. juglandis (Xanthomonas arboricola pv. juglandis).